The chain runs to 159 residues: Cytochrome b6-f complex subunit 4 (159 aa).

3 consecutive transmembrane segments (helical) span residues I35–L55, L93–E113, and A127–I147.

The protein belongs to the cytochrome b family. PetD subfamily. As to quaternary structure, the 4 large subunits of the cytochrome b6-f complex are cytochrome b6, subunit IV (17 kDa polypeptide, PetD), cytochrome f and the Rieske protein, while the 4 small subunits are PetG, PetL, PetM and PetN. The complex functions as a dimer.

It is found in the cell inner membrane. Functionally, component of the cytochrome b6-f complex, which mediates electron transfer between photosystem II (PSII) and photosystem I (PSI), cyclic electron flow around PSI, and state transitions. This is Cytochrome b6-f complex subunit 4 from Gloeobacter violaceus (strain ATCC 29082 / PCC 7421).